Here is a 173-residue protein sequence, read N- to C-terminus: Calmodulin-like protein 11 (173 aa).

Positions 1–26 are enriched in low complexity; that stretch reads MEEIQQQQQQQQQQQQQQQQQQQQQQ. A disordered region spans residues 1–27; sequence MEEIQQQQQQQQQQQQQQQQQQQQQQE. EF-hand domains lie at 31–66, 67–102, 104–139, and 140–173; these read EQIM…LDQN, PTEQ…QLQE, DADE…LGEK, and LTDE…MING. 20 residues coordinate Ca(2+): Asp44, Asp46, Asp48, Cys50, Glu55, Asp80, Asp82, Asn84, Thr86, Glu91, Asp117, Asp119, Asn121, Tyr123, Glu128, Asp153, Asp155, Asp157, Gln159, and Glu164.

This sequence belongs to the calmodulin family.

Potential calcium sensor. This chain is Calmodulin-like protein 11 (CML11), found in Arabidopsis thaliana (Mouse-ear cress).